The primary structure comprises 130 residues: Small ribosomal subunit protein uS8 (130 aa).

It belongs to the universal ribosomal protein uS8 family. As to quaternary structure, part of the 30S ribosomal subunit. Contacts proteins S5 and S12.

In terms of biological role, one of the primary rRNA binding proteins, it binds directly to 16S rRNA central domain where it helps coordinate assembly of the platform of the 30S subunit. This is Small ribosomal subunit protein uS8 from Histophilus somni (strain 129Pt) (Haemophilus somnus).